Reading from the N-terminus, the 209-residue chain is MNPFYQQARFLISAARPDAFPTDEGMEVAFAGRSNAGKSSAINVLCNQRALARTSKTPGRTQLINFFALDESRRLVDLPGYGYAKVPEAMRKAWRKLMEHYLGERACLKGLVVVMDIRHPLTDHDWTMLGWARERGLAVHVLLTKADKIRRGPAMDTARQVARALGDAGIEATVQPFSALKREGVEDAHGILDQWLGLTAEPEARAASE.

An EngB-type G domain is found at 24 to 198 (EGMEVAFAGR…HGILDQWLGL (175 aa)). GTP-binding positions include 32 to 39 (GRSNAGKS), 59 to 63 (GRTQL), 77 to 80 (DLPG), 144 to 147 (TKAD), and 177 to 179 (FSA). 2 residues coordinate Mg(2+): S39 and T61.

Belongs to the TRAFAC class TrmE-Era-EngA-EngB-Septin-like GTPase superfamily. EngB GTPase family. Mg(2+) is required as a cofactor.

Functionally, necessary for normal cell division and for the maintenance of normal septation. The protein is Probable GTP-binding protein EngB of Thioalkalivibrio sulfidiphilus (strain HL-EbGR7).